A 454-amino-acid polypeptide reads, in one-letter code: UDP-N-acetylmuramoylalanine--D-glutamate ligase (454 aa).

ATP is bound at residue 115 to 121; it reads GTNGKTT.

This sequence belongs to the MurCDEF family.

It is found in the cytoplasm. The enzyme catalyses UDP-N-acetyl-alpha-D-muramoyl-L-alanine + D-glutamate + ATP = UDP-N-acetyl-alpha-D-muramoyl-L-alanyl-D-glutamate + ADP + phosphate + H(+). The protein operates within cell wall biogenesis; peptidoglycan biosynthesis. Cell wall formation. Catalyzes the addition of glutamate to the nucleotide precursor UDP-N-acetylmuramoyl-L-alanine (UMA). The protein is UDP-N-acetylmuramoylalanine--D-glutamate ligase of Thermoanaerobacter sp. (strain X514).